Here is a 330-residue protein sequence, read N- to C-terminus: MTLQHKLAQFPRLDLVGNATPLEKLSRLSDYLGREIYIKRDDVTPLALGGNKLRKLEFLAADALRQGADTLVTAGAIQSNHVRQTAAVAAKLGLHCVALLENPIGTSQENYLTNGNRLLLDLFNVEVVMCDGLHDPNQQLAELATRIEAQGFRPYVVPVGGSNAFGALGYVQCALEIAAQSAGNVTFSSVVVASGSAGTHAGLAVGLQQLLPQTELIGVTVSRKAEEQRPKVIHIQQELATSLGVTSGPADITLWDDYFAPQYGMPNEEGLAAIGLLARLEGILLDPVYTGKAMAGLLDGLEQKKFRDDGPILFIHTGGAPALFAYHPQV.

An N6-(pyridoxal phosphate)lysine modification is found at Lys52.

The protein belongs to the ACC deaminase/D-cysteine desulfhydrase family. Homodimer. Requires pyridoxal 5'-phosphate as cofactor.

It carries out the reaction D-cysteine + H2O = hydrogen sulfide + pyruvate + NH4(+) + H(+). Functionally, catalyzes the alpha,beta-elimination reaction of D-cysteine and of several D-cysteine derivatives. It could be a defense mechanism against D-cysteine. In Yersinia enterocolitica serotype O:8 / biotype 1B (strain NCTC 13174 / 8081), this protein is D-cysteine desulfhydrase.